We begin with the raw amino-acid sequence, 167 residues long: Biogenesis of lysosome-related organelles complex 1 subunit 6 (167 aa).

Positions 1–11 are enriched in polar residues; sequence MLKSSNINSVL. Residues 1–38 form a disordered region; it reads MLKSSNINSVLNELPNDPARDSTAQSSHNGKPKQDAET. The stretch at 102–160 forms a coiled coil; sequence ARLNDMMSDVKRYKDKLTKIKKEMQGVYQRTKELKKRAANVAACKQRDYQRKLERLQHE.

This sequence belongs to the BLOC1S6 family. Component of the biogenesis of lysosome-related organelles complex-1 (BLOC-1) composed of Blos1, Blos2, Blos3, Blos4, Dysb, Muted, Pldn and Snapin. Interacts with Blos1, Blos4 and Dysb.

Its subcellular location is the synapse. The protein resides in the cytoplasm. It localises to the cytoskeleton. It is found in the myofibril. The protein localises to the sarcomere. Its subcellular location is the z line. In terms of biological role, component of the biogenesis of lysosome-related organelles complex-1 (BLOC-1) involved in pigment granule biogenesis and membrane trafficking in synapses. In response to high synaptic activity at neuromuscular junctions, plays a key role in promoting efficient synaptic vesicle recycling and re-formation through early endosomes. The sequence is that of Biogenesis of lysosome-related organelles complex 1 subunit 6 from Drosophila melanogaster (Fruit fly).